The following is a 168-amino-acid chain: Phosphopantetheine adenylyltransferase (168 aa).

Position 13 (threonine 13) interacts with substrate. Residues 13–14 (TF) and histidine 21 each bind ATP. Positions 45, 78, and 92 each coordinate substrate. Residues 93-95 (GLR), glutamate 103, and 128-134 (TQFISSS) each bind ATP.

Belongs to the bacterial CoaD family. In terms of assembly, homohexamer. Requires Mg(2+) as cofactor.

It localises to the cytoplasm. The catalysed reaction is (R)-4'-phosphopantetheine + ATP + H(+) = 3'-dephospho-CoA + diphosphate. It participates in cofactor biosynthesis; coenzyme A biosynthesis; CoA from (R)-pantothenate: step 4/5. Functionally, reversibly transfers an adenylyl group from ATP to 4'-phosphopantetheine, yielding dephospho-CoA (dPCoA) and pyrophosphate. In Wolbachia pipientis subsp. Culex pipiens (strain wPip), this protein is Phosphopantetheine adenylyltransferase.